The sequence spans 464 residues: ATP synthase subunit beta (464 aa).

150–157 (GGAGVGKT) serves as a coordination point for ATP.

It belongs to the ATPase alpha/beta chains family. F-type ATPases have 2 components, CF(1) - the catalytic core - and CF(0) - the membrane proton channel. CF(1) has five subunits: alpha(3), beta(3), gamma(1), delta(1), epsilon(1). CF(0) has three main subunits: a(1), b(2) and c(9-12). The alpha and beta chains form an alternating ring which encloses part of the gamma chain. CF(1) is attached to CF(0) by a central stalk formed by the gamma and epsilon chains, while a peripheral stalk is formed by the delta and b chains.

Its subcellular location is the cell membrane. It carries out the reaction ATP + H2O + 4 H(+)(in) = ADP + phosphate + 5 H(+)(out). Functionally, produces ATP from ADP in the presence of a proton gradient across the membrane. The catalytic sites are hosted primarily by the beta subunits. The sequence is that of ATP synthase subunit beta from Dehalococcoides mccartyi (strain ATCC BAA-2266 / KCTC 15142 / 195) (Dehalococcoides ethenogenes (strain 195)).